A 203-amino-acid chain; its full sequence is Peptidyl-tRNA hydrolase (203 aa).

Tyr-18 contributes to the tRNA binding site. His-23 (proton acceptor) is an active-site residue. TRNA contacts are provided by Tyr-69, Asn-71, and Asn-117.

The protein belongs to the PTH family. In terms of assembly, monomer.

It localises to the cytoplasm. It carries out the reaction an N-acyl-L-alpha-aminoacyl-tRNA + H2O = an N-acyl-L-amino acid + a tRNA + H(+). Hydrolyzes ribosome-free peptidyl-tRNAs (with 1 or more amino acids incorporated), which drop off the ribosome during protein synthesis, or as a result of ribosome stalling. In terms of biological role, catalyzes the release of premature peptidyl moieties from peptidyl-tRNA molecules trapped in stalled 50S ribosomal subunits, and thus maintains levels of free tRNAs and 50S ribosomes. In Parasynechococcus marenigrum (strain WH8102), this protein is Peptidyl-tRNA hydrolase.